A 1024-amino-acid chain; its full sequence is Eukaryotic translation initiation factor 3 subunit A (1024 aa).

The region spanning 331–508 is the PCI domain; sequence VISSNAPGTG…QAITFQDDVF (178 aa). Coiled coils occupy residues 575-717 and 777-889; these read AAED…REEA and KRRG…RRSR. Basic and acidic residues-rich tracts occupy residues 797-866 and 873-886; these read KERR…ERRA and DKQRQREEEAEANR. Disordered regions lie at residues 797-973 and 1001-1024; these read KERR…GAYR and AAAAESDGFTEVKKNVYRPPGRRA. Composition is skewed to low complexity over residues 890-906 and 946-971; these read AAGTGAAPAQELAAADA and KEAAGGNATAAPSAPAAAPAPASSGA.

Belongs to the eIF-3 subunit A family. As to quaternary structure, component of the eukaryotic translation initiation factor 3 (eIF-3) complex.

Its subcellular location is the cytoplasm. Its function is as follows. RNA-binding component of the eukaryotic translation initiation factor 3 (eIF-3) complex, which is involved in protein synthesis of a specialized repertoire of mRNAs and, together with other initiation factors, stimulates binding of mRNA and methionyl-tRNAi to the 40S ribosome. The eIF-3 complex specifically targets and initiates translation of a subset of mRNAs involved in cell proliferation. The polypeptide is Eukaryotic translation initiation factor 3 subunit A (Mycosarcoma maydis (Corn smut fungus)).